Here is a 267-residue protein sequence, read N- to C-terminus: Outer membrane protein assembly factor BamD (267 aa).

A signal peptide spans 1–16 (MKKILLTVSLGLALSA). C17 carries N-palmitoyl cysteine lipidation. Residue C17 is the site of S-diacylglycerol cysteine attachment.

It belongs to the BamD family. Part of the Bam complex.

The protein resides in the cell outer membrane. Its function is as follows. Part of the outer membrane protein assembly complex, which is involved in assembly and insertion of beta-barrel proteins into the outer membrane. Required for efficient transformation of Neisseria meningitidis by species-related DNA. The sequence is that of Outer membrane protein assembly factor BamD from Neisseria meningitidis serogroup B (strain ATCC BAA-335 / MC58).